Reading from the N-terminus, the 243-residue chain is Cell division protein ZipA (243 aa).

Over 1-4 the chain is Periplasmic; it reads MSDV. The helical transmembrane segment at 5–25 threads the bilayer; it reads TLLRIGIAIVGILFVAAVFFF. The Cytoplasmic portion of the chain corresponds to 26 to 243; it reads STPKTSAHRV…VPPLIKNSRW (218 aa). The tract at residues 32–89 is disordered; that stretch reads AHRVRTKKEEPPRERREPMLSTEVDNSPHQSVDEVPASVPQQQVNPEATKPGEIELGK. Positions 38-49 are enriched in basic and acidic residues; that stretch reads KKEEPPRERREP.

It belongs to the ZipA family. As to quaternary structure, interacts with FtsZ via their C-terminal domains.

It is found in the cell inner membrane. Essential cell division protein that stabilizes the FtsZ protofilaments by cross-linking them and that serves as a cytoplasmic membrane anchor for the Z ring. Also required for the recruitment to the septal ring of downstream cell division proteins. This Xylella fastidiosa (strain Temecula1 / ATCC 700964) protein is Cell division protein ZipA.